A 169-amino-acid polypeptide reads, in one-letter code: Endoribonuclease YbeY (169 aa).

3 residues coordinate Zn(2+): H126, H130, and H136.

This sequence belongs to the endoribonuclease YbeY family. The cofactor is Zn(2+).

The protein resides in the cytoplasm. Single strand-specific metallo-endoribonuclease involved in late-stage 70S ribosome quality control and in maturation of the 3' terminus of the 16S rRNA. The chain is Endoribonuclease YbeY from Bradyrhizobium sp. (strain BTAi1 / ATCC BAA-1182).